A 180-amino-acid chain; its full sequence is Mitochondrial inner membrane protease subunit 2 (180 aa).

A helical transmembrane segment spans residues 19-39 (LVGITLWVPVLMFVEQHVVSV). Catalysis depends on residues Ser46 and Lys92.

This sequence belongs to the peptidase S26 family. IMP2 subfamily. Heterodimer of 2 subunits, imp1 and imp2.

It localises to the mitochondrion inner membrane. Its function is as follows. Catalyzes the removal of transit peptides required for the targeting of proteins from the mitochondrial matrix, across the inner membrane, into the inter-membrane space. The protein is Mitochondrial inner membrane protease subunit 2 of Schizosaccharomyces pombe (strain 972 / ATCC 24843) (Fission yeast).